The chain runs to 310 residues: UDP-N-acetylenolpyruvoylglucosamine reductase (310 aa).

An FAD-binding PCMH-type domain is found at 35–203 (RAGGAAEALV…TRVRFALRKG (169 aa)). The active site involves arginine 183. Serine 232 acts as the Proton donor in catalysis. Glutamate 302 is an active-site residue.

This sequence belongs to the MurB family. Requires FAD as cofactor.

It is found in the cytoplasm. It carries out the reaction UDP-N-acetyl-alpha-D-muramate + NADP(+) = UDP-N-acetyl-3-O-(1-carboxyvinyl)-alpha-D-glucosamine + NADPH + H(+). It participates in cell wall biogenesis; peptidoglycan biosynthesis. Functionally, cell wall formation. The sequence is that of UDP-N-acetylenolpyruvoylglucosamine reductase from Myxococcus xanthus (strain DK1622).